The primary structure comprises 820 residues: Inhibitor of nuclear factor kappa-B kinase epsilon subunit homolog 1 (820 aa).

Positions 21–299 (LFNDESIGKG…TDIFEFQPVT (279 aa)) constitute a Protein kinase domain. Residues 27 to 35 (IGKGAYSEV) and K49 each bind ATP. Catalysis depends on D149, which acts as the Proton acceptor. The tract at residues 758–798 (SPNKEQFPKPEQDSILESSIDEGSTSFESTPPSSPPDVGSN) is disordered.

The protein belongs to the protein kinase superfamily. Ser/Thr protein kinase family. In terms of assembly, interacts with allo-1 (via N-terminus); the interaction is direct. In terms of tissue distribution, expressed in oocytes.

Its subcellular location is the cytoplasm. It carries out the reaction L-seryl-[protein] + ATP = O-phospho-L-seryl-[protein] + ADP + H(+). The catalysed reaction is L-threonyl-[protein] + ATP = O-phospho-L-threonyl-[protein] + ADP + H(+). Functionally, serine/threonine-protein kinase, which plays a role in regulating allophagy, an autophagic process in which paternal organelles, including mitochondria and membranous organelles, are degraded in embryos. Phosphorylates the allophagy receptor allo-1, which is required for allophagy. In Caenorhabditis elegans, this protein is Inhibitor of nuclear factor kappa-B kinase epsilon subunit homolog 1.